A 97-amino-acid chain; its full sequence is Co-chaperonin GroES (97 aa).

It belongs to the GroES chaperonin family. In terms of assembly, heptamer of 7 subunits arranged in a ring. Interacts with the chaperonin GroEL.

It is found in the cytoplasm. Its function is as follows. Together with the chaperonin GroEL, plays an essential role in assisting protein folding. The GroEL-GroES system forms a nano-cage that allows encapsulation of the non-native substrate proteins and provides a physical environment optimized to promote and accelerate protein folding. GroES binds to the apical surface of the GroEL ring, thereby capping the opening of the GroEL channel. The polypeptide is Co-chaperonin GroES (Edwardsiella ictaluri (strain 93-146)).